The chain runs to 198 residues: Recombination protein RecR (198 aa).

The C4-type zinc finger occupies 57 to 72; sequence CEKCNTFTEAQICEVC. The region spanning 80–175 is the Toprim domain; that stretch reads TLLCVVETPA…AVTRLARGVP (96 aa).

It belongs to the RecR family.

May play a role in DNA repair. It seems to be involved in an RecBC-independent recombinational process of DNA repair. It may act with RecF and RecO. In Burkholderia vietnamiensis (strain G4 / LMG 22486) (Burkholderia cepacia (strain R1808)), this protein is Recombination protein RecR.